The following is a 271-amino-acid chain: UPF0758 protein ACIAD3126 (271 aa).

The MPN domain maps to 120-242 (NLNSSRLVLD…TFSFAERALL (123 aa)). Residues His191, His193, and Asp204 each contribute to the Zn(2+) site. Residues 191–204 (HNHPFGKAEPSAAD) carry the JAMM motif motif.

This sequence belongs to the UPF0758 family.

The sequence is that of UPF0758 protein ACIAD3126 from Acinetobacter baylyi (strain ATCC 33305 / BD413 / ADP1).